The primary structure comprises 72 residues: Translation initiation factor IF-1 (72 aa).

The S1-like domain occupies 1 to 72; it reads MAKDDVIEVD…DKGRITFRYK (72 aa).

The protein belongs to the IF-1 family. In terms of assembly, component of the 30S ribosomal translation pre-initiation complex which assembles on the 30S ribosome in the order IF-2 and IF-3, IF-1 and N-formylmethionyl-tRNA(fMet); mRNA recruitment can occur at any time during PIC assembly.

It localises to the cytoplasm. In terms of biological role, one of the essential components for the initiation of protein synthesis. Stabilizes the binding of IF-2 and IF-3 on the 30S subunit to which N-formylmethionyl-tRNA(fMet) subsequently binds. Helps modulate mRNA selection, yielding the 30S pre-initiation complex (PIC). Upon addition of the 50S ribosomal subunit IF-1, IF-2 and IF-3 are released leaving the mature 70S translation initiation complex. The sequence is that of Translation initiation factor IF-1 from Nitratiruptor sp. (strain SB155-2).